A 693-amino-acid polypeptide reads, in one-letter code: MAPWPELENSQPTSEKYTVKADGEQSAKPEKAKETEKDDTGTPITKIELVPSHSTATLIEEPTEVEDPWDLPELKDTGLKWSERDTKGKILCVFQGIGKFILLLVFLYFFVCSLDVLSSAFQLVGGKVAGKFFNNNSIMSNPLAGMVIGVLVTVLVQSSSTSTSIVVSMVASSLLPVHAAIPIIMGANIGTSITNTIVALMQAGDRKEFRRAFAGATVHDFFNWLSVLVLLPLEAATGYLERLTNLVVESFHFKNGEEAPELLKVITDPFTKLIIQLDKSILNQIAMNDESVQNKSMIKIWCKTFTNVTERNVTVPSPENCTSPSLCWTDGLYTWTIKNVTYKENIAKCQHIFVNFNLSDAIVGTILLITSLLILCTCLILIVKLLGSVLRGQVAAVIKKTINTDFPYPFSWVTGYLAILVGAGMTFIVQSSSVFTSAMTPLIGIGVISIQRAYPLTLGANIGTTTTAILAALASPGSTLKSSLQIALCHFFFNISGIILWYPIPFTRLPIRLAKGLGNISSKYRWFAIVYLIVFFLLIPLAVFGLSLIGWPVLVGVASPIVLVILLVVVLKILQSFCPGSLPQKLRSWDFLPFWMRSLEPWDKLITSLTSCFQMRCCCCCRVCCRLCCGLCGCSKCCRCTKCSEDLEEGKDEPVKSPEAFNNLAMDKEAQDGVTKSEVDASGTKIVSSVTAL.

A disordered region spans residues 1-46; that stretch reads MAPWPELENSQPTSEKYTVKADGEQSAKPEKAKETEKDDTGTPITK. At 1–89 the chain is on the cytoplasmic side; the sequence is MAPWPELENS…KWSERDTKGK (89 aa). Basic and acidic residues predominate over residues 17–40; sequence YTVKADGEQSAKPEKAKETEKDDT. Residues 90–110 traverse the membrane as a helical segment; it reads ILCVFQGIGKFILLLVFLYFF. The Extracellular portion of the chain corresponds to 111 to 135; that stretch reads VCSLDVLSSAFQLVGGKVAGKFFNN. A helical membrane pass occupies residues 136-156; that stretch reads NSIMSNPLAGMVIGVLVTVLV. Topologically, residues 157–212 are cytoplasmic; it reads QSSSTSTSIVVSMVASSLLPVHAAIPIIMGANIGTSITNTIVALMQAGDRKEFRRA. Residues 213–233 traverse the membrane as a helical segment; the sequence is FAGATVHDFFNWLSVLVLLPL. Residues 234-361 are Extracellular-facing; the sequence is EAATGYLERL…IFVNFNLSDA (128 aa). An intrachain disulfide couples cysteine 302 to cysteine 349. Asparagine 307 and asparagine 320 each carry an N-linked (GlcNAc...) asparagine glycan. The chain crosses the membrane as a helical span at residues 362-382; the sequence is IVGTILLITSLLILCTCLILI. Residues 383-408 are Cytoplasmic-facing; sequence VKLLGSVLRGQVAAVIKKTINTDFPY. The helical transmembrane segment at 409-429 threads the bilayer; that stretch reads PFSWVTGYLAILVGAGMTFIV. The Extracellular portion of the chain corresponds to 430–485; it reads QSSSVFTSAMTPLIGIGVISIQRAYPLTLGANIGTTTTAILAALASPGSTLKSSLQ. A helical membrane pass occupies residues 486–506; the sequence is IALCHFFFNISGIILWYPIPF. Residues 507–525 are Cytoplasmic-facing; sequence TRLPIRLAKGLGNISSKYR. A helical transmembrane segment spans residues 526–546; that stretch reads WFAIVYLIVFFLLIPLAVFGL. The Extracellular segment spans residues 547–550; that stretch reads SLIG. The helical transmembrane segment at 551 to 571 threads the bilayer; it reads WPVLVGVASPIVLVILLVVVL. Residues 572–693 lie on the Cytoplasmic side of the membrane; sequence KILQSFCPGS…TKIVSSVTAL (122 aa).

Belongs to the SLC34A transporter family. In terms of processing, glycosylated.

It localises to the apical cell membrane. It catalyses the reaction 3 Na(+)(out) + phosphate(out) = 3 Na(+)(in) + phosphate(in). Functionally, involved in actively transporting phosphate into cells via Na(+) cotransport. The chain is Sodium-dependent phosphate transport protein 2B (SLC34A2) from Bos taurus (Bovine).